An 897-amino-acid chain; its full sequence is Beta-galactosidase (897 aa).

Glu459 functions as the Proton donor in the catalytic mechanism. Catalysis depends on Glu525, which acts as the Nucleophile.

It belongs to the glycosyl hydrolase 2 family.

It carries out the reaction Hydrolysis of terminal non-reducing beta-D-galactose residues in beta-D-galactosides.. In Clostridium acetobutylicum, this protein is Beta-galactosidase (cbgA).